Reading from the N-terminus, the 221-residue chain is Large ribosomal subunit protein uL3 (221 aa).

It belongs to the universal ribosomal protein uL3 family. In terms of assembly, part of the 50S ribosomal subunit. Forms a cluster with proteins L14 and L19.

Its function is as follows. One of the primary rRNA binding proteins, it binds directly near the 3'-end of the 23S rRNA, where it nucleates assembly of the 50S subunit. In Chlamydia muridarum (strain MoPn / Nigg), this protein is Large ribosomal subunit protein uL3.